Consider the following 212-residue polypeptide: Phosphatidylserine decarboxylase proenzyme (212 aa).

The Schiff-base intermediate with substrate; via pyruvic acid role is filled by Ser-182. Ser-182 carries the post-translational modification Pyruvic acid (Ser); by autocatalysis.

This sequence belongs to the phosphatidylserine decarboxylase family. PSD-A subfamily. Heterodimer of a large membrane-associated beta subunit and a small pyruvoyl-containing alpha subunit. Pyruvate serves as cofactor. Post-translationally, is synthesized initially as an inactive proenzyme. Formation of the active enzyme involves a self-maturation process in which the active site pyruvoyl group is generated from an internal serine residue via an autocatalytic post-translational modification. Two non-identical subunits are generated from the proenzyme in this reaction, and the pyruvate is formed at the N-terminus of the alpha chain, which is derived from the carboxyl end of the proenzyme. The post-translation cleavage follows an unusual pathway, termed non-hydrolytic serinolysis, in which the side chain hydroxyl group of the serine supplies its oxygen atom to form the C-terminus of the beta chain, while the remainder of the serine residue undergoes an oxidative deamination to produce ammonia and the pyruvoyl prosthetic group on the alpha chain.

Its subcellular location is the cell membrane. The catalysed reaction is a 1,2-diacyl-sn-glycero-3-phospho-L-serine + H(+) = a 1,2-diacyl-sn-glycero-3-phosphoethanolamine + CO2. It participates in phospholipid metabolism; phosphatidylethanolamine biosynthesis; phosphatidylethanolamine from CDP-diacylglycerol: step 2/2. Functionally, catalyzes the formation of phosphatidylethanolamine (PtdEtn) from phosphatidylserine (PtdSer). The protein is Phosphatidylserine decarboxylase proenzyme of Paraburkholderia xenovorans (strain LB400).